The following is a 373-amino-acid chain: Integrator complex subunit 15 (373 aa).

This sequence belongs to the Integrator subunit 15 family. As to quaternary structure, belongs to the multiprotein complex Integrator, at least composed of IntS1, IntS2, IntS3, IntS4, omd/IntS5, IntS6, defl/IntS7, IntS8, IntS9, IntS10, IntS11, IntS12, asun/IntS13, IntS14 and IntS15. The core complex associates with protein phosphatase 2A subunits mts/PP2A and Pp2A-29B, to form the Integrator-PP2A (INTAC) complex.

The protein localises to the nucleus. Component of the integrator complex, a multiprotein complex that terminates RNA polymerase II (Pol II) transcription in the promoter-proximal region of genes. The integrator complex provides a quality checkpoint during transcription elongation by driving premature transcription termination of transcripts that are unfavorably configured for transcriptional elongation: the complex terminates transcription by (1) catalyzing dephosphorylation of the C-terminal domain (CTD) of Pol II subunit Rbp1 and Spt5, and (2) degrading the exiting nascent RNA transcript via endonuclease activity. The integrator complex is also involved in the 3'-end processing of the U7 snRNA, and also the spliceosomal snRNAs U1, U2, U4 and U5. This Drosophila melanogaster (Fruit fly) protein is Integrator complex subunit 15.